The primary structure comprises 502 residues: Nondiscriminating glutamyl-tRNA synthetase EARS2, mitochondrial (502 aa).

The transit peptide at 1–20 (MAGMLREVCGAAASGLRVRF) directs the protein to the mitochondrion. 19–21 (RFG) serves as a coordination point for L-glutamate. The 'HIGH' region motif lies at 24–32 (PTGFLHLGG). Residue His-29 coordinates ATP. Residues Glu-55, 207–211 (YHLAN), and Arg-225 each bind L-glutamate. ATP is bound by residues Glu-228 and 263-267 (KLSKR). A 'KMSKS' region motif is present at residues 263–267 (KLSKR).

It belongs to the class-I aminoacyl-tRNA synthetase family. Glutamate--tRNA ligase type 1 subfamily.

It is found in the mitochondrion matrix. The enzyme catalyses tRNA(Glx) + L-glutamate + ATP = L-glutamyl-tRNA(Glx) + AMP + diphosphate. The catalysed reaction is tRNA(Glu) + L-glutamate + ATP = L-glutamyl-tRNA(Glu) + AMP + diphosphate. It carries out the reaction tRNA(Gln) + L-glutamate + ATP = L-glutamyl-tRNA(Gln) + AMP + diphosphate. Functionally, non-discriminating glutamyl-tRNA synthetase that catalyzes aminoacylation of both mitochondrial tRNA(Glu) and tRNA(Gln) and participates in RNA aminoacylation for mitochondrial protein translation. Attachs glutamate to tRNA(Glu) or tRNA(Gln) in a two-step reaction: glutamate is first activated by ATP to form Glu-AMP and then transferred to the acceptor end of tRNA(Glu) or tRNA(Gln). The sequence is that of Nondiscriminating glutamyl-tRNA synthetase EARS2, mitochondrial from Gallus gallus (Chicken).